Reading from the N-terminus, the 116-residue chain is uncharacterized protein (116 aa).

The chain crosses the membrane as a helical span at residues 58 to 78 (IIVDFKFIFQIFLILSFGFFA).

It is found in the membrane. This is an uncharacterized protein from Rickettsia prowazekii (strain Madrid E).